A 139-amino-acid chain; its full sequence is MTTQPSKQLETFENPIQTRDYRIHMEIPEFTCLCPKTGQPDFARLTLDYIPDKKCIELKSLKLYIWSYRNEGTFHEAVTNQILDDLVIAMKPRFIRLTSKFYVRGGIFTNVVAEHRKKGWHPQPPVFLESFDEQFNTRS.

The Thioimide intermediate role is filled by Cys34. Residue Asp41 is the Proton donor of the active site. Residues 56-58 and 75-76 contribute to the substrate site; these read IEL and HE.

Belongs to the GTP cyclohydrolase I family. QueF type 1 subfamily.

Its subcellular location is the cytoplasm. The catalysed reaction is 7-aminomethyl-7-carbaguanine + 2 NADP(+) = 7-cyano-7-deazaguanine + 2 NADPH + 3 H(+). It participates in tRNA modification; tRNA-queuosine biosynthesis. Functionally, catalyzes the NADPH-dependent reduction of 7-cyano-7-deazaguanine (preQ0) to 7-aminomethyl-7-deazaguanine (preQ1). This chain is NADPH-dependent 7-cyano-7-deazaguanine reductase, found in Nitrosomonas eutropha (strain DSM 101675 / C91 / Nm57).